The chain runs to 63 residues: Large ribosomal subunit protein bL28 (63 aa).

Belongs to the bacterial ribosomal protein bL28 family.

This chain is Large ribosomal subunit protein bL28, found in Beutenbergia cavernae (strain ATCC BAA-8 / DSM 12333 / CCUG 43141 / JCM 11478 / NBRC 16432 / NCIMB 13614 / HKI 0122).